Here is a 407-residue protein sequence, read N- to C-terminus: MRGIVTRIVLSTQKCLPSVNCTRRYYSKQKDISIVRQRLGRPGNHLKIGIVGMPNIGKSTLFQILTKTNLGNPANYPFATIDPVHAKAPVLDSQYELLCEIYQPKTRIPAQLTIYDTAGLTRNSSKGEGLGNAFLSNIRSVDALFQLVRAFPEAQVPHVEKSVDPVRDLQIIQEELLLKDAEFLESYLKKEGRSPKTCAKALDTARRALEVVLGKGRQISKAEWNDEQIPILNSLNLLTAKPVVYLVNMDQDDYLSDEQEALKGIKEWVEKNSFGDQVIPLSVLFEEQLFMLTPEEAAQECASLGKNSQLSEIICAGYSALNLIHYFTASEKIVQAWTIADGSKAPDAAGIIHSDFKKKFVAGEVIKFSDFEKYKSVDACKSVGKCKTKGKDYTVEPGDIIFWKIAR.

Residues 46-301 (LKIGIVGMPN…LTPEEAAQEC (256 aa)) enclose the OBG-type G domain. Residues 55–60 (NIGKST) and methionine 249 contribute to the ATP site. One can recognise a TGS domain in the interval 322 to 405 (NLIHYFTASE…EPGDIIFWKI (84 aa)).

This sequence belongs to the TRAFAC class OBG-HflX-like GTPase superfamily. OBG GTPase family.

In terms of biological role, hydrolyzes ATP, and can also hydrolyze GTP with lower efficiency. Has lower affinity for GTP. In Schizosaccharomyces pombe (strain 972 / ATCC 24843) (Fission yeast), this protein is Obg-like ATPase homolog.